Here is a 74-residue protein sequence, read N- to C-terminus: Small integral membrane protein 15 (74 aa).

Residues 20–40 (YGFLTTVILVLTPLFIISAAL) traverse the membrane as a helical segment. The stretch at 48 to 74 (IETREREQKKKRKRQENIVKAKRAKKD) forms a coiled coil. Positions 53–74 (REQKKKRKRQENIVKAKRAKKD) are disordered. Positions 56–74 (KKKRKRQENIVKAKRAKKD) are enriched in basic residues.

The protein belongs to the SMIM15 family.

Its subcellular location is the membrane. The chain is Small integral membrane protein 15 (SMIM15) from Gallus gallus (Chicken).